Here is an 82-residue protein sequence, read N- to C-terminus: Small ribosomal subunit protein bS16 (82 aa).

Belongs to the bacterial ribosomal protein bS16 family.

This Francisella tularensis subsp. tularensis (strain FSC 198) protein is Small ribosomal subunit protein bS16.